The following is a 405-amino-acid chain: Elongation factor Tu (405 aa).

Residues 10–213 enclose the tr-type G domain; sequence KEHVNVGTIG…AMDEYIPTPQ (204 aa). Positions 19–26 are G1; the sequence is GHVDHGKS. 19–26 is a binding site for GTP; the sequence is GHVDHGKS. Ser26 is a binding site for Mg(2+). The interval 64–68 is G2; that stretch reads GITIN. The segment at 85-88 is G3; that stretch reads DCPG. Residues 85–89 and 140–143 each bind GTP; these read DCPGH and NKCD. Residues 140–143 form a G4 region; the sequence is NKCD. Residues 178–180 form a G5 region; that stretch reads SAL.

Belongs to the TRAFAC class translation factor GTPase superfamily. Classic translation factor GTPase family. EF-Tu/EF-1A subfamily. Monomer.

Its subcellular location is the cytoplasm. The catalysed reaction is GTP + H2O = GDP + phosphate + H(+). Functionally, GTP hydrolase that promotes the GTP-dependent binding of aminoacyl-tRNA to the A-site of ribosomes during protein biosynthesis. The sequence is that of Elongation factor Tu from Aquifex aeolicus (strain VF5).